Reading from the N-terminus, the 284-residue chain is Bifunctional protein FolD (284 aa).

Residues 165-167 (GRS) and serine 190 contribute to the NADP(+) site.

The protein belongs to the tetrahydrofolate dehydrogenase/cyclohydrolase family. Homodimer.

The enzyme catalyses (6R)-5,10-methylene-5,6,7,8-tetrahydrofolate + NADP(+) = (6R)-5,10-methenyltetrahydrofolate + NADPH. The catalysed reaction is (6R)-5,10-methenyltetrahydrofolate + H2O = (6R)-10-formyltetrahydrofolate + H(+). The protein operates within one-carbon metabolism; tetrahydrofolate interconversion. Its function is as follows. Catalyzes the oxidation of 5,10-methylenetetrahydrofolate to 5,10-methenyltetrahydrofolate and then the hydrolysis of 5,10-methenyltetrahydrofolate to 10-formyltetrahydrofolate. The protein is Bifunctional protein FolD of Streptococcus sanguinis (strain SK36).